We begin with the raw amino-acid sequence, 2319 residues long: Coagulation factor VIII (2319 aa).

The first 19 residues, 1 to 19 (MQIALFACFFLSLFNFCSS), serve as a signal peptide directing secretion. 2 consecutive Plastocyanin-like domains span residues 20 to 199 (AIRR…LLVC) and 207 to 349 (ERTQ…VDSC). An F5/8 type A 1 domain is found at 20–349 (AIRRYYLGAV…MEAYVKVDSC (330 aa)). Asn61 is a glycosylation site (N-linked (GlcNAc...) asparagine). An intrachain disulfide couples Cys173 to Cys199. Asn233 and Asn259 each carry an N-linked (GlcNAc...) asparagine glycan. Tyr367 carries the sulfotyrosine modification. Plastocyanin-like domains follow at residues 399-573 (KTWI…LLIC) and 583-730 (NQMM…VSSC). The region spanning 399–730 (KTWIHYISAE…MTALLKVSSC (332 aa)) is the F5/8 type A 2 domain. Residue Asn423 is glycosylated (N-linked (GlcNAc...) asparagine). A disulfide bridge links Cys547 with Cys573. Asn601 carries an N-linked (GlcNAc...) asparagine glycan. Sulfotyrosine is present on residues Tyr737, Tyr738, and Tyr742. Residues 760-1640 (SFFQNTNHPN…IPPVLKRHQR (881 aa)) are b. Asn880, Asn958, Asn1015, Asn1022, Asn1026, Asn1044, Asn1076, Asn1087, Asn1136, Asn1161, Asn1192, Asn1255, Asn1268, Asn1273, Asn1274, Asn1302, Asn1316, Asn1340, and Asn1378 each carry an N-linked (GlcNAc...) asparagine glycan. The interval 1530–1549 (WNKAKRHGESIKGKTESSKN) is disordered. The segment covering 1536-1548 (HGESIKGKTESSK) has biased composition (basic and acidic residues). Residues Tyr1669 and Tyr1687 each carry the sulfotyrosine modification. 2 consecutive Plastocyanin-like domains span residues 1683–1845 (KTRH…LLIC) and 1855–2008 (GRQV…SKQC). Positions 1683–2008 (KTRHYFIAAV…TLFLVYSKQC (326 aa)) constitute an F5/8 type A 3 domain. N-linked (GlcNAc...) asparagine glycosylation occurs at Asn1797. Disulfide bonds link Cys1819–Cys1845, Cys2008–Cys2156, and Cys2161–Cys2313. 2 consecutive F5/8 type C domains span residues 2008 to 2156 (CQIP…LMGC) and 2161 to 2313 (CSIP…ILGC). Asn2105 carries N-linked (GlcNAc...) asparagine glycosylation.

It belongs to the multicopper oxidase family. In terms of assembly, interacts with vWF. vWF binding is essential for the stabilization of F8 in circulation. Post-translationally, the binding of vWF and activation depend on the sulfation of Tyr-1669. Proteolytically cleaved by cathepsin CTSG to produce a partially activated form. As to expression, found in most tissues.

Its subcellular location is the secreted. It localises to the extracellular space. Its function is as follows. Factor VIII, along with calcium and phospholipid, acts as a cofactor for factor IXa when it converts factor X to the activated form, factor Xa. The protein is Coagulation factor VIII (F8) of Mus musculus (Mouse).